We begin with the raw amino-acid sequence, 429 residues long: Phosphomethylpyrimidine synthase (429 aa).

Substrate is bound by residues Asn66, Met95, Tyr124, His163, Ser185–Gly187, Asp226–Arg229, and Glu265. Position 269 (His269) interacts with Zn(2+). Substrate is bound at residue Tyr292. His333 serves as a coordination point for Zn(2+). [4Fe-4S] cluster-binding residues include Cys409, Cys412, and Cys416.

It belongs to the ThiC family. [4Fe-4S] cluster is required as a cofactor.

It carries out the reaction 5-amino-1-(5-phospho-beta-D-ribosyl)imidazole + S-adenosyl-L-methionine = 4-amino-2-methyl-5-(phosphooxymethyl)pyrimidine + CO + 5'-deoxyadenosine + formate + L-methionine + 3 H(+). It participates in cofactor biosynthesis; thiamine diphosphate biosynthesis. In terms of biological role, catalyzes the synthesis of the hydroxymethylpyrimidine phosphate (HMP-P) moiety of thiamine from aminoimidazole ribotide (AIR) in a radical S-adenosyl-L-methionine (SAM)-dependent reaction. The polypeptide is Phosphomethylpyrimidine synthase (Methanopyrus kandleri (strain AV19 / DSM 6324 / JCM 9639 / NBRC 100938)).